An 85-amino-acid polypeptide reads, in one-letter code: Large ribosomal subunit protein bL27 (85 aa).

Residues 1-11 are compositionally biased toward polar residues; that stretch reads MASKASGGSTR. The disordered stretch occupies residues 1–20; it reads MASKASGGSTRNGRDSISKR.

This sequence belongs to the bacterial ribosomal protein bL27 family.

The sequence is that of Large ribosomal subunit protein bL27 from Sulfurihydrogenibium sp. (strain YO3AOP1).